The sequence spans 144 residues: PE family protein PE9 (144 aa).

Residues 1–87 (MSYMIATPAA…RTLTGGCGVF (87 aa)) form the PE domain. The tract at residues 98 to 124 (AAEHRAAGAGRRQRRRRSGDGQWRLRQ) is disordered.

The protein belongs to the mycobacterial PE family. Forms a complex with PE10. The complex interacts with human TLR4.

It is found in the secreted. The protein resides in the cell wall. It localises to the cell surface. In terms of biological role, together with PE10, induces macrophage apoptosis through human Toll-like receptor 4 (TLR4) signaling pathway. Interaction with TLR4 leads to increased levels of phospho-IRF-3, increase in the transcript levels of IFN-beta and pro-apoptotic genes, up-regulation of IL-10, down-regulation of IL-1b and enhanced levels of macrophage apoptosis. In Mycobacterium tuberculosis (strain ATCC 25618 / H37Rv), this protein is PE family protein PE9.